A 437-amino-acid polypeptide reads, in one-letter code: UDP-N-acetylmuramate--L-alanine ligase (437 aa).

ATP is bound at residue Gly114–Ser120.

The protein belongs to the MurCDEF family.

The protein localises to the cytoplasm. The catalysed reaction is UDP-N-acetyl-alpha-D-muramate + L-alanine + ATP = UDP-N-acetyl-alpha-D-muramoyl-L-alanine + ADP + phosphate + H(+). Its pathway is cell wall biogenesis; peptidoglycan biosynthesis. Functionally, cell wall formation. The protein is UDP-N-acetylmuramate--L-alanine ligase of Lactobacillus gasseri (strain ATCC 33323 / DSM 20243 / BCRC 14619 / CIP 102991 / JCM 1131 / KCTC 3163 / NCIMB 11718 / NCTC 13722 / AM63).